The sequence spans 281 residues: Apolipoprotein E (281 aa).

A signal peptide spans 1-18; sequence MKVLWAALLIALLAGCQG. Repeat copies occupy residues 82-103, 104-125, 126-147, 148-169, and 198-219. The segment at 82 to 219 is 5 X 22 AA approximate tandem repeats; that stretch reads ALMDETMKEL…RLDEVKEQVE (138 aa). Methionine sulfoxide is present on Met145. Ser149 is modified (phosphoserine). The tract at residues 160 to 170 is LDL and other lipoprotein receptors binding; it reads HLRKLRTVSYT. Heparin is bound by residues 164-167 and 193-200; these read LRTV and GERLRTRM. The tract at residues 230–281 is homooligomerization; it reads QQMRLQAEAFQARLKSWFEPLVEDMQRQWAGLVEKVQAAVGASAAPVPSDNH. The interval 242 to 254 is specificity for association with VLDL; it reads RLKSWFEPLVEDM.

Belongs to the apolipoprotein A1/A4/E family. Homotetramer. May interact with ABCA1; functionally associated with ABCA1 in the biogenesis of HDLs. May interact with APP/A4 amyloid-beta peptide; the interaction is extremely stable in vitro but its physiological significance is unclear. May interact with MAPT. May interact with MAP2. In the cerebrospinal fluid, interacts with secreted SORL1. Interacts with PMEL; this allows the loading of PMEL luminal fragment on ILVs to induce fibril nucleation. APOE exists as multiple glycosylated and sialylated glycoforms within cells and in plasma. The extent of glycosylation and sialylation are tissue and context specific. In terms of processing, glycated in plasma VLDL. Post-translationally, phosphorylated by FAM20C in the extracellular medium.

The protein localises to the secreted. The protein resides in the extracellular space. It is found in the extracellular matrix. Its subcellular location is the extracellular vesicle. It localises to the endosome. The protein localises to the multivesicular body. APOE is an apolipoprotein, a protein associating with lipid particles, that mainly functions in lipoprotein-mediated lipid transport between organs via the plasma and interstitial fluids. APOE is a core component of plasma lipoproteins and is involved in their production, conversion and clearance. Apolipoproteins are amphipathic molecules that interact both with lipids of the lipoprotein particle core and the aqueous environment of the plasma. As such, APOE associates with chylomicrons, chylomicron remnants, very low density lipoproteins (VLDL) and intermediate density lipoproteins (IDL) but shows a preferential binding to high-density lipoproteins (HDL). It also binds a wide range of cellular receptors including the LDL receptor/LDLR, the LDL receptor-related proteins LRP1, LRP2 and LRP8 and the very low-density lipoprotein receptor/VLDLR that mediate the cellular uptake of the APOE-containing lipoprotein particles. Finally, APOE also has a heparin-binding activity and binds heparan-sulfate proteoglycans on the surface of cells, a property that supports the capture and the receptor-mediated uptake of APOE-containing lipoproteins by cells. A main function of APOE is to mediate lipoprotein clearance through the uptake of chylomicrons, VLDLs, and HDLs by hepatocytes. APOE is also involved in the biosynthesis by the liver of VLDLs as well as their uptake by peripheral tissues ensuring the delivery of triglycerides and energy storage in muscle, heart and adipose tissues. By participating in the lipoprotein-mediated distribution of lipids among tissues, APOE plays a critical role in plasma and tissues lipid homeostasis. APOE is also involved in two steps of reverse cholesterol transport, the HDLs-mediated transport of cholesterol from peripheral tissues to the liver, and thereby plays an important role in cholesterol homeostasis. First, it is functionally associated with ABCA1 in the biogenesis of HDLs in tissues. Second, it is enriched in circulating HDLs and mediates their uptake by hepatocytes. APOE also plays an important role in lipid transport in the central nervous system, regulating neuron survival and sprouting. In Aotus nancymaae (Ma's night monkey), this protein is Apolipoprotein E (APOE).